A 68-amino-acid chain; its full sequence is Translational regulator CsrA 1 (68 aa).

This sequence belongs to the CsrA/RsmA family. In terms of assembly, homodimer; the beta-strands of each monomer intercalate to form a hydrophobic core, while the alpha-helices form wings that extend away from the core.

It localises to the cytoplasm. In terms of biological role, a key translational regulator that binds mRNA to regulate translation initiation and/or mRNA stability. Mediates global changes in gene expression, shifting from rapid growth to stress survival by linking envelope stress, the stringent response and the catabolite repression systems. Usually binds in the 5'-UTR; binding at or near the Shine-Dalgarno sequence prevents ribosome-binding, repressing translation, binding elsewhere in the 5'-UTR can activate translation and/or stabilize the mRNA. Its function is antagonized by small RNA(s). The sequence is that of Translational regulator CsrA 1 from Coxiella burnetii (strain RSA 493 / Nine Mile phase I).